The sequence spans 67 residues: Large ribosomal subunit protein uL29 (67 aa).

It belongs to the universal ribosomal protein uL29 family.

The sequence is that of Large ribosomal subunit protein uL29 from Sorangium cellulosum (strain So ce56) (Polyangium cellulosum (strain So ce56)).